A 297-amino-acid polypeptide reads, in one-letter code: 3-mercaptopyruvate sulfurtransferase (297 aa).

Position 2 is an N-acetylalanine (Ala2). Ser3, Trp15, Pro23, and Ser35 each carry phosphoserine. In terms of domain architecture, Rhodanese 1 spans 25-144 (AGQPLQLLDA…WLRQNLPLSS (120 aa)). Lys40 carries the post-translational modification N6-acetyllysine; alternate. An N6-succinyllysine; alternate modification is found at Lys40. The tract at residues 145 to 160 (GKSQPAPAEFRAQLDP) is hinge. An N6-succinyllysine mark is found at Lys146 and Lys164. The region spanning 174–288 (ESRRFQVVDS…WYMRARPEDV (115 aa)) is the Rhodanese 2 domain. Arg188 serves as a coordination point for substrate. Cys248 acts as the Cysteine persulfide intermediate in catalysis.

In terms of assembly, monomer (active form). Homodimer; disulfide-linked (inactive form).

It localises to the cytoplasm. It is found in the mitochondrion. The protein resides in the synapse. The protein localises to the synaptosome. The enzyme catalyses 2-oxo-3-sulfanylpropanoate + [thioredoxin]-dithiol = [thioredoxin]-disulfide + hydrogen sulfide + pyruvate + H(+). With respect to regulation, by oxidative stress, and thioredoxin. Under oxidative stress conditions, the catalytic cysteine site is converted to a sulfenate which inhibits the MPST enzyme activity. Reduced thioredoxin cleaves an intersubunit disulfide bond to turn on the redox switch and reactivate the enzyme. In terms of biological role, transfer of a sulfur ion to cyanide or to other thiol compounds. Also has weak rhodanese activity. Detoxifies cyanide and is required for thiosulfate biosynthesis. Acts as an antioxidant. In combination with cysteine aminotransferase (CAT), contributes to the catabolism of cysteine and is an important producer of hydrogen sulfide in the brain, retina and vascular endothelial cells. Hydrogen sulfide H(2)S is an important synaptic modulator, signaling molecule, smooth muscle contractor and neuroprotectant. Its production by the 3MST/CAT pathway is regulated by calcium ions. In Homo sapiens (Human), this protein is 3-mercaptopyruvate sulfurtransferase (MPST).